The primary structure comprises 92 residues: Small ribosomal subunit protein uS19 (92 aa).

Belongs to the universal ribosomal protein uS19 family.

Its function is as follows. Protein S19 forms a complex with S13 that binds strongly to the 16S ribosomal RNA. The protein is Small ribosomal subunit protein uS19 of Bacillus cereus (strain B4264).